We begin with the raw amino-acid sequence, 614 residues long: Acetylcholinesterase (614 aa).

An N-terminal signal peptide occupies residues 1–31; it reads MRPPQCLLHTPSLASPLLLLLLWLLGGGVGA. A disulfide bridge connects residues cysteine 100 and cysteine 127. Tryptophan 117 lines the galanthamine pocket. Position 117 (tryptophan 117) interacts with huperzine A. Residue glycine 153 coordinates huprine W. Tyrosine 164 contributes to the huperzine A binding site. 233–234 lines the galanthamine pocket; sequence ES. A huprine W-binding site is contributed by serine 234. The active-site Acyl-ester intermediate is the serine 234. Cysteines 288 and 303 form a disulfide. N-linked (GlcNAc...) asparagine glycosylation occurs at asparagine 296. Glutamate 365 serves as the catalytic Charge relay system. Tyrosine 368 is a galanthamine binding site. Position 368 (tyrosine 368) interacts with huperzine A. A glycan (N-linked (GlcNAc...) asparagine) is linked at asparagine 381. A disulfide bridge connects residues cysteine 440 and cysteine 560. Tryptophan 470 and histidine 478 together coordinate huprine W. Histidine 478 acts as the Charge relay system in catalysis. The N-linked (GlcNAc...) asparagine glycan is linked to asparagine 495. Phenylalanine 588 carries GPI-anchor amidated glycine lipidation.

This sequence belongs to the type-B carboxylesterase/lipase family. As to quaternary structure, interacts with PRIMA1. The interaction with PRIMA1 is required to anchor it to the basal lamina of cells and organize into tetramers. Isoform H generates GPI-anchored dimers; disulfide linked. Isoform T generates multiple structures, ranging from monomers and dimers to collagen-tailed and hydrophobic-tailed forms, in which catalytic tetramers are associated with anchoring proteins that attach them to the basal lamina or to cell membranes. In the collagen-tailed forms, isoform T subunits are associated with a specific collagen, COLQ, which triggers the formation of isoform T tetramers, from monomers and dimers. Isoform R may be monomeric. In terms of tissue distribution, isoform H is highly expressed in erythrocytes.

It is found in the synapse. The protein resides in the secreted. Its subcellular location is the cell membrane. It localises to the nucleus. The catalysed reaction is acetylcholine + H2O = choline + acetate + H(+). Its function is as follows. Hydrolyzes rapidly the acetylcholine neurotransmitter released into the synaptic cleft allowing to terminate the signal transduction at the neuromuscular junction. Role in neuronal apoptosis. This Homo sapiens (Human) protein is Acetylcholinesterase.